Here is a 408-residue protein sequence, read N- to C-terminus: Phosphoenolpyruvate/phosphate translocator 1, chloroplastic (408 aa).

Residues 1-85 (MQSSAVFSLS…SLDTNRFRTA (85 aa)) constitute a chloroplast transit peptide. N-acetylalanine is present on A86. 8 consecutive transmembrane segments (helical) span residues 105–125 (VLELGLLFAMWYLFNIYFNIY), 137–157 (MTVTLVQFAVGSVLITIMWVL), 165–185 (ISGAQLAAILPLAVVHTLGNL), 198–218 (FTHTIKAMEPFFSVLLSAMFL), 222–242 (PTPWVLGAIVPIVGGVALASI), 283–303 (ITLFSIITLMSLVLMAPVTFF), 324–346 (IYTKSLIAALCFHAYQQVSYMIL), and 377–396 (VSPVNAFGTGIALAGVFLYS). An EamA domain is found at 124–241 (IYNKQVLKAL…PIVGGVALAS (118 aa)).

This sequence belongs to the TPT transporter family. PPT (TC 2.A.7.9) subfamily. Expressed in root columella, lateral root cap and root vasculature tissue. In leaves, highly expressed in xylem parenchyma cells. In flowers, expressed in sepals, petals, filaments of the stamens, anthers and stigma.

It localises to the plastid. Its subcellular location is the chloroplast membrane. In terms of biological role, phosphoenolpyruvate/phosphate translocator that transports phosphoenolpyruvate (PEP), 2-phosphoglycerate, 3-phosphoglycerate and dihydroxyacetone phosphate. Imports PEP to the chloroplast stroma as one substrate of the shikimate pathway, from which aromatic amino acids and a variety of secondary products derive. Required for correct leaf mesophyll cell development and expression of chlorophyll a/b binding protein 3 (CAB3). In Arabidopsis thaliana (Mouse-ear cress), this protein is Phosphoenolpyruvate/phosphate translocator 1, chloroplastic (PPT1).